Consider the following 274-residue polypeptide: Centriolar and ciliogenesis-associated protein hyls-1 (274 aa).

Disordered regions lie at residues 156–188 (RSSVDDEENIAESVSVGLSTETEQSELQKSSRP) and 255–274 (NNEDWKANHDKDWSPRPYID). Over residues 171 to 183 (VGLSTETEQSELQ) the composition is skewed to polar residues. Residues 257–274 (EDWKANHDKDWSPRPYID) are compositionally biased toward basic and acidic residues.

It belongs to the HYLS1 family. Interacts with sas-4; leading to its localization into newly forming centrioles.

The protein resides in the cytoplasm. It localises to the cytoskeleton. It is found in the microtubule organizing center. The protein localises to the centrosome. Its subcellular location is the centriole. The protein resides in the cell projection. It localises to the cilium. Functionally, plays an important role in ciliogenesis. The chain is Centriolar and ciliogenesis-associated protein hyls-1 from Caenorhabditis elegans.